The primary structure comprises 812 residues: Protein FAM83G (812 aa).

Alanine 2 carries the post-translational modification N-acetylalanine. The DUF1669 stretch occupies residues 2–312 (AFSQVQCLDD…LYLMSQSVSL (311 aa)). Residue serine 4 is modified to Phosphoserine. The interval 76-119 (PGSEDPRVSGRRPEPQDNGGADASEETSAAGGPPATETLPSLEY) is disordered. A compositionally biased stretch (basic and acidic residues) spans 79–90 (EDPRVSGRRPEP). Serine 124, serine 127, and serine 356 each carry phosphoserine. Disordered stretches follow at residues 362–389 (KSSS…GDLS), 455–509 (ASAQ…KPRT), and 521–812 (SDIG…HKEP). Positions 455–467 (ASAQHQLWKQSQG) are enriched in polar residues. Residues 471 to 480 (CPAPCPPPAP) are compositionally biased toward pro residues. Positions 545 to 562 (STASESEVPQQQHSSMTQ) are enriched in polar residues. Acidic residues predominate over residues 576-586 (LDEDEDDDDDY). Residues 589 to 598 (LSDQDSLSGS) show a composition bias toward low complexity. Phosphoserine occurs at positions 609, 613, 615, and 649. Over residues 721–731 (SSSKKASPAAA) the composition is skewed to low complexity. The segment covering 761–772 (LRAELRATEEHA) has biased composition (basic and acidic residues).

It belongs to the FAM83 family. Interacts with SMAD1 (via MH2 domain); in a SMAD4-independent manner. Directly interacts (via DUF1669) with casein kinase isoforms CSNK1A1 and CSNK1A1L. BMP signaling induces the phosphorylation by BMPR1A at Ser-609, Ser-613 and Ser-615. Phosphorylation at Ser-609 is necessary for the activation of SMAD4-independent BMP target genes such as NEDD9 and ASNS. Post-translationally, phosphorylated by CSNK1A1.

The protein localises to the cytoplasm. Its subcellular location is the cytosol. The protein resides in the nucleus. Functionally, substrate for type I BMP receptor kinase involved in regulation of some target genes of the BMP signaling pathway. Also regulates the expression of several non-BMP target genes, suggesting a role in other signaling pathways. The polypeptide is Protein FAM83G (Fam83g) (Mus musculus (Mouse)).